The following is a 206-amino-acid chain: Small ribosomal subunit protein eS1 (206 aa).

It belongs to the eukaryotic ribosomal protein eS1 family.

This Halobacterium salinarum (strain ATCC 29341 / DSM 671 / R1) protein is Small ribosomal subunit protein eS1.